We begin with the raw amino-acid sequence, 1129 residues long: Phytochrome A type 3 (1129 aa).

Residues 1 to 21 are compositionally biased toward low complexity; sequence MSSSRPASSSSSRNRQSSQAR. Residues 1–24 form a disordered region; sequence MSSSRPASSSSSRNRQSSQARVLA. The GAF domain maps to 217–402; sequence SMEVLCNTVV…VFAVHVNREF (186 aa). A phytochromobilin-binding site is contributed by C322. 2 PAS domains span residues 618–688 and 748–822; these read VTSE…LQGK and VEGD…VSLC. A Histidine kinase domain is found at 902-1122; it reads YMRHAINNPL…TFIITAELAS (221 aa).

This sequence belongs to the phytochrome family. In terms of assembly, homodimer. In terms of processing, contains one covalently linked phytochromobilin chromophore.

Regulatory photoreceptor which exists in two forms that are reversibly interconvertible by light: the Pr form that absorbs maximally in the red region of the spectrum and the Pfr form that absorbs maximally in the far-red region. Photoconversion of Pr to Pfr induces an array of morphogenic responses, whereas reconversion of Pfr to Pr cancels the induction of those responses. Pfr controls the expression of a number of nuclear genes including those encoding the small subunit of ribulose-bisphosphate carboxylase, chlorophyll A/B binding protein, protochlorophyllide reductase, rRNA, etc. It also controls the expression of its own gene(s) in a negative feedback fashion. This is Phytochrome A type 3 (PHYA3) from Avena sativa (Oat).